The chain runs to 648 residues: 60 kDa heat shock protein homolog 1, mitochondrial (648 aa).

Residues 1-55 (MFRSCVPKAITSSRCFARMYSKDVRFGSGVRAMMIRGVDILADAVAVTMGPKGRS) constitute a mitochondrion transit peptide.

It belongs to the chaperonin (HSP60) family.

The protein localises to the mitochondrion matrix. Prevents misfolding and promotes the refolding and proper assembly of unfolded polypeptides generated under stress conditions. The sequence is that of 60 kDa heat shock protein homolog 1, mitochondrial (Hsp60B) from Drosophila melanogaster (Fruit fly).